A 421-amino-acid chain; its full sequence is Phosphoribosylamine--glycine ligase (421 aa).

The region spanning 108-314 is the ATP-grasp domain; it reads KEIMVKYNVP…FAQNIDDIMM (207 aa). Position 134-195 (134-195) interacts with ATP; it reads IEEQGAPIVV…EEFLDGEEFS (62 aa). The Mg(2+) site is built by Glu-284 and Asn-286.

Belongs to the GARS family. The cofactor is Mg(2+). Mn(2+) is required as a cofactor.

The catalysed reaction is 5-phospho-beta-D-ribosylamine + glycine + ATP = N(1)-(5-phospho-beta-D-ribosyl)glycinamide + ADP + phosphate + H(+). It functions in the pathway purine metabolism; IMP biosynthesis via de novo pathway; N(1)-(5-phospho-D-ribosyl)glycinamide from 5-phospho-alpha-D-ribose 1-diphosphate: step 2/2. The chain is Phosphoribosylamine--glycine ligase from Streptococcus pyogenes serotype M3 (strain SSI-1).